A 678-amino-acid chain; its full sequence is Ribosome biogenesis protein BOP1 homolog (678 aa).

Over residues 1-10 (MGHSDGDHGS) the composition is skewed to basic and acidic residues. Positions 1 to 73 (MGHSDGDHGS…VAPRNTIGDV (73 aa)) are disordered. Positions 24–63 (WSDDDDEGSLSFEDSGEGSDAESDEPDAPAVEESDSSEDE) are enriched in acidic residues. 7 WD repeats span residues 343-384 (GHNG…KVWN), 386-424 (GGVV…EDAQ), 463-505 (IHHK…SHHP), 508-548 (KLPG…KKLE), 549-588 (SGVR…RPYK), 592-631 (NHSK…DLNQ), and 647-678 (SDGR…LYCD).

It belongs to the WD repeat BOP1/ERB1 family.

It is found in the nucleus. Its subcellular location is the nucleolus. The protein resides in the nucleoplasm. Functionally, required for maturation of ribosomal RNAs and formation of the large ribosomal subunit. This is Ribosome biogenesis protein BOP1 homolog from Oryza sativa subsp. japonica (Rice).